Reading from the N-terminus, the 291-residue chain is ATP synthase gamma chain (291 aa).

It belongs to the ATPase gamma chain family. In terms of assembly, F-type ATPases have 2 components, CF(1) - the catalytic core - and CF(0) - the membrane proton channel. CF(1) has five subunits: alpha(3), beta(3), gamma(1), delta(1), epsilon(1). CF(0) has three main subunits: a, b and c.

Its subcellular location is the cell inner membrane. Produces ATP from ADP in the presence of a proton gradient across the membrane. The gamma chain is believed to be important in regulating ATPase activity and the flow of protons through the CF(0) complex. The polypeptide is ATP synthase gamma chain (Methylobacillus flagellatus (strain ATCC 51484 / DSM 6875 / VKM B-1610 / KT)).